We begin with the raw amino-acid sequence, 1423 residues long: DNA-directed RNA polymerase subunit beta' (1423 aa).

C70, C72, C85, and C88 together coordinate Zn(2+). Mg(2+)-binding residues include D461, D463, and D465. Zn(2+) contacts are provided by C809, C883, C890, and C893. The segment at 1383-1423 is disordered; sequence EEHAAELRQPVQADTGDDPLGAVVGESHGTDADAGDYLTEE.

This sequence belongs to the RNA polymerase beta' chain family. As to quaternary structure, the RNAP catalytic core consists of 2 alpha, 1 beta, 1 beta' and 1 omega subunit. When a sigma factor is associated with the core the holoenzyme is formed, which can initiate transcription. Requires Mg(2+) as cofactor. Zn(2+) is required as a cofactor.

It catalyses the reaction RNA(n) + a ribonucleoside 5'-triphosphate = RNA(n+1) + diphosphate. Its function is as follows. DNA-dependent RNA polymerase catalyzes the transcription of DNA into RNA using the four ribonucleoside triphosphates as substrates. The chain is DNA-directed RNA polymerase subunit beta' from Rhizorhabdus wittichii (strain DSM 6014 / CCUG 31198 / JCM 15750 / NBRC 105917 / EY 4224 / RW1) (Sphingomonas wittichii).